Consider the following 605-residue polypeptide: MSLNFLKRYLSRSTRNFQHVFEDQHGLLSIRNPEIDVPITTIDDNLDERNINGPQSDQEIVNRLIQSMVISKNEETRPMLKNEQLMNIYKHWNLYHKNDLPFINPTKYTPFEFQSIENDDISYINNPRLSVTKLLISGWCELRELYRVFAGSVRTPPTKAMSAGTKLHLKLEQALHGVIDLEDIENFIRSNTEEIMEMYDLVDNDGIFDMNPDDSIAIDWSETIIERLYSLIVCSESREVILHGYLNLQKESFVENEQEIKNPSSVLVSGIVDQIQFENPENSDDFALFDEVQKYLDVEYEQVDETPLVDLSRFFDDVKNIIQCYPEFQLKFTDLKTRMVYQIPSQKSVLDSAKFQTFYYRYFFELLSKDANFAYRCLLENAKRRGLDVDKPLSVLTTFRILRRHYHLFYNDFLKLADGKPIGFAPFDSERIDSDYEFGKLFVLGKDFAQHQEQASQHLKFIESLGGYDSLEYDKLLLPLLKTWKTPPTLRYLAARSAQFYEIFGSRLGDTTTVEYRNTFTGKIIDTKVYNYNNGELETETIHASDFWNGKLDPEPTNDFSRCQYCEFKSKCAIPKIGKISDSHASIGPEVRKFLNDVKHLQKDC.

The transit peptide at 1–17 (MSLNFLKRYLSRSTRNF) directs the protein to the mitochondrion. [4Fe-4S] cluster contacts are provided by C140, C563, C566, and C572.

Belongs to the EXO5 family. In terms of assembly, monomer. It depends on Mg(2+) as a cofactor. [4Fe-4S] cluster is required as a cofactor.

Its subcellular location is the mitochondrion. Single strand DNA specific 5' exonuclease involved in mitochondrial DNA replication and recombination. Releases dinucleotides as main products of catalysis. Has the capacity to slide across 5'double-stranded DNA or 5'RNA sequences and resumes cutting two nucleotides downstream of the double-stranded-to-single-stranded junction or RNA-to-DNA junction, respectively. This chain is Exonuclease V, mitochondrial (EXO5), found in Candida tropicalis (strain ATCC MYA-3404 / T1) (Yeast).